The sequence spans 146 residues: Angiogenin (146 aa).

The signal sequence occupies residues 1-24 (MVMGLGLFLLVFMLGLGLTSPTLA). Residue Q25 is modified to Pyrrolidone carboxylic acid. The Proton acceptor role is filled by H37. Residue R45 coordinates tRNA. 3 disulfides stabilise this stretch: C50–C105, C63–C116, and C81–C131. A Nucleolar localization signal motif is present at residues 55 to 59 (RRQGM). Residues C105 and I127 each contribute to the tRNA site. The active-site Proton donor is the H138.

It belongs to the pancreatic ribonuclease family. Homodimer. Interacts with RNH1; inhibiting ANG ribonuclease activity. Interacts with PCNA.

The protein localises to the secreted. It is found in the nucleus. The protein resides in the nucleolus. It localises to the cytoplasm. Its subcellular location is the stress granule. Has weak tRNA ribonuclease activity by itself due to partial autoinhibition by its C-terminus, which folds into a short alpha-helix that partially occludes the substrate-binding site. In absence of stress, the ribonuclease activity is inhibited by RNH1 in the cytoplasm. In response to stress, dissociates from RNH1 in the cytoplasm and associates with cytoplasmic ribosomes with vacant A-sites: ribosomes directly activate the tRNA ribonuclease activity of ANG by refolding the C-terminal alpha-helix. In response to stress, the angiogenic activity of ANG is inhibited by RNH1 in the nucleus. In terms of biological role, secreted ribonuclease that can either promote or restrict cell proliferation of target cells, depending on the context. Endocytosed in target cells via its receptor PLXNB2 and translocates to the cytoplasm or nucleus. Under stress conditions, localizes to the cytoplasm and promotes the assembly of stress granules (SGs): specifically cleaves a subset of tRNAs within anticodon loops to produce tRNA-derived stress-induced fragments (tiRNAs), resulting in translation repression and inhibition of cell proliferation. tiRNas also prevent formation of apoptosome, thereby promoting cell survival. Preferentially cleaves RNAs between a pyrimidine and an adenosine residue, suggesting that it cleaves the anticodon loop of tRNA(Ala) (32-UUAGCAU-38) after positions 33 and 36. Cleaves a subset of tRNAs, including tRNA(Ala), tRNA(Glu), tRNA(Gly), tRNA(Lys), tRNA(Val), tRNA(His), tRNA(Asp) and tRNA(Sec). Under growth conditions and in differentiated cells, translocates to the nucleus and stimulates ribosomal RNA (rRNA) transcription, including that containing the initiation site sequences of 45S rRNA, thereby promoting cell growth and proliferation. Angiogenin induces vascularization of normal and malignant tissues via its ability to promote rRNA transcription. Involved in hematopoietic stem and progenitor cell (HSPC) growth and survival by promoting rRNA transcription in growth conditions and inhibiting translation in response to stress, respectively. Mediates the crosstalk between myeloid and intestinal epithelial cells to protect the intestinal epithelial barrier integrity: secreted by myeloid cells and promotes intestinal epithelial cells proliferation and survival. Also mediates osteoclast-endothelial cell crosstalk in growing bone: produced by osteoclasts and protects the neighboring vascular cells against senescence by promoting rRNA transcription. The sequence is that of Angiogenin (ANG) from Miopithecus talapoin (Angolan talapoin).